The sequence spans 435 residues: Elongation factor 1-alpha (435 aa).

The tr-type G domain occupies 5-226 (KTHINLVVIG…DTMEPPKRPT (222 aa)). Residues 14-21 (GHVDSGKS) form a G1 region. 14 to 21 (GHVDSGKS) contributes to the GTP binding site. Residues 70 to 74 (GITID) form a G2 region. The tract at residues 91–94 (DAPG) is G3. GTP-binding positions include 91-95 (DAPGH) and 151-154 (NKMD). Positions 151 to 154 (NKMD) are G4. Residues 190-192 (SGF) are G5.

The protein belongs to the TRAFAC class translation factor GTPase superfamily. Classic translation factor GTPase family. EF-Tu/EF-1A subfamily.

The protein resides in the cytoplasm. Its function is as follows. This protein promotes the GTP-dependent binding of aminoacyl-tRNA to the A-site of ribosomes during protein biosynthesis. The polypeptide is Elongation factor 1-alpha (Cryptosporidium parvum).